The primary structure comprises 223 residues: Protein DEHYDRATION-INDUCED 19 homolog 3 (223 aa).

Residue T114 is modified to Phosphothreonine. S116 bears the Phosphoserine mark.

Belongs to the Di19 family. Post-translationally, phosphorylated in vitro by CPK3 or CPK11. In terms of tissue distribution, expressed in seedlings, roots, leaves, stems, flowers and siliques.

The protein localises to the nucleus. The chain is Protein DEHYDRATION-INDUCED 19 homolog 3 (DI19-3) from Arabidopsis thaliana (Mouse-ear cress).